A 228-amino-acid polypeptide reads, in one-letter code: MEEKKQQNVTIKGTKDGITLHLDDCCSFSELLIELDEKLSTHYYDGDGRSLIEVHVKVGNRYLTEVQQEEIRTLIRNKKNLVVDSIKSDVITKAEAIAWKEETEIVPISKIVRSGQVLHVKGNLLLIGDVNPGGTVIAGGNIFVVGSLRGIAHAGYYGDSDAVIAASVMNPMQLRISDVAMRAPEEKEDGAEAAECAYINENNHIVVDRLQLLTHLRPNLTKLERGIV.

The protein belongs to the MinC family. As to quaternary structure, interacts with MinD and FtsZ.

Its function is as follows. Cell division inhibitor that blocks the formation of polar Z ring septums. Rapidly oscillates between the poles of the cell to destabilize FtsZ filaments that have formed before they mature into polar Z rings. Prevents FtsZ polymerization. The chain is Probable septum site-determining protein MinC from Bacillus cereus (strain G9842).